We begin with the raw amino-acid sequence, 361 residues long: S-adenosylmethionine:tRNA ribosyltransferase-isomerase (361 aa).

It belongs to the QueA family. As to quaternary structure, monomer.

Its subcellular location is the cytoplasm. The enzyme catalyses 7-aminomethyl-7-carbaguanosine(34) in tRNA + S-adenosyl-L-methionine = epoxyqueuosine(34) in tRNA + adenine + L-methionine + 2 H(+). It participates in tRNA modification; tRNA-queuosine biosynthesis. Functionally, transfers and isomerizes the ribose moiety from AdoMet to the 7-aminomethyl group of 7-deazaguanine (preQ1-tRNA) to give epoxyqueuosine (oQ-tRNA). This is S-adenosylmethionine:tRNA ribosyltransferase-isomerase from Actinobacillus pleuropneumoniae serotype 3 (strain JL03).